The following is a 286-amino-acid chain: Orotidine 5'-phosphate decarboxylase (286 aa).

Residues Asp-35, Lys-57–His-59, Asp-89–Thr-98, Tyr-239, and Arg-257 each bind substrate. Lys-91 acts as the Proton donor in catalysis.

The protein belongs to the OMP decarboxylase family.

The catalysed reaction is orotidine 5'-phosphate + H(+) = UMP + CO2. The protein operates within pyrimidine metabolism; UMP biosynthesis via de novo pathway; UMP from orotate: step 2/2. This Yarrowia lipolytica (strain CLIB 122 / E 150) (Yeast) protein is Orotidine 5'-phosphate decarboxylase (URA3).